A 611-amino-acid chain; its full sequence is Threonine--tRNA ligase (611 aa).

A catalytic region spans residues 209-502 (DHRRLGKDLE…MTENYAGDFP (294 aa)). Zn(2+) contacts are provided by C302, H353, and H479.

This sequence belongs to the class-II aminoacyl-tRNA synthetase family. Homodimer. It depends on Zn(2+) as a cofactor.

It localises to the cytoplasm. The enzyme catalyses tRNA(Thr) + L-threonine + ATP = L-threonyl-tRNA(Thr) + AMP + diphosphate + H(+). Functionally, catalyzes the attachment of threonine to tRNA(Thr) in a two-step reaction: L-threonine is first activated by ATP to form Thr-AMP and then transferred to the acceptor end of tRNA(Thr). Also edits incorrectly charged L-seryl-tRNA(Thr). The polypeptide is Threonine--tRNA ligase (Synechococcus sp. (strain CC9902)).